The primary structure comprises 240 residues: Ribosomal RNA small subunit methyltransferase G (240 aa).

S-adenosyl-L-methionine contacts are provided by residues glycine 80, phenylalanine 85, aspartate 103–serine 105, alanine 131–glutamate 132, and arginine 150.

The protein belongs to the methyltransferase superfamily. RNA methyltransferase RsmG family.

Its subcellular location is the cytoplasm. Specifically methylates the N7 position of a guanine in 16S rRNA. This is Ribosomal RNA small subunit methyltransferase G from Thermoanaerobacter sp. (strain X514).